A 193-amino-acid chain; its full sequence is Ribosomal RNA small subunit methyltransferase G (193 aa).

S-adenosyl-L-methionine-binding positions include G61, L66, 112 to 113 (IE), and R126.

This sequence belongs to the methyltransferase superfamily. RNA methyltransferase RsmG family.

The protein resides in the cytoplasm. It carries out the reaction guanosine(527) in 16S rRNA + S-adenosyl-L-methionine = N(7)-methylguanosine(527) in 16S rRNA + S-adenosyl-L-homocysteine. Specifically methylates the N7 position of guanine in position 527 of 16S rRNA. In Paracoccus denitrificans (strain Pd 1222), this protein is Ribosomal RNA small subunit methyltransferase G.